Consider the following 174-residue polypeptide: Large ribosomal subunit protein uL18 (174 aa).

This sequence belongs to the universal ribosomal protein uL18 family. In terms of assembly, part of the 50S ribosomal subunit. Contacts the 5S and 23S rRNAs.

Its function is as follows. This is one of the proteins that bind and probably mediate the attachment of the 5S RNA into the large ribosomal subunit, where it forms part of the central protuberance. The protein is Large ribosomal subunit protein uL18 of Methanosarcina acetivorans (strain ATCC 35395 / DSM 2834 / JCM 12185 / C2A).